The primary structure comprises 104 residues: Small ribosomal subunit protein uS10 (104 aa).

This sequence belongs to the universal ribosomal protein uS10 family. Part of the 30S ribosomal subunit.

Its function is as follows. Involved in the binding of tRNA to the ribosomes. This chain is Small ribosomal subunit protein uS10, found in Thermosynechococcus vestitus (strain NIES-2133 / IAM M-273 / BP-1).